Reading from the N-terminus, the 169-residue chain is Thaumatin-like pathogenesis-related protein 3 (169 aa).

Positions 1 to 21 are cleaved as a signal peptide; sequence MATSSAVLFLLLAVFAAGASA.

It belongs to the thaumatin family.

Its function is as follows. Associated with resistance against stem rust fungi. The polypeptide is Thaumatin-like pathogenesis-related protein 3 (RASTL-3) (Avena sativa (Oat)).